We begin with the raw amino-acid sequence, 139 residues long: Plastocyanin (139 aa).

The signal sequence occupies residues 1–34 (MKLIAASLRRLSLAVLTVLLVVSSFAVFTPSAAA). In terms of domain architecture, Plastocyanin-like spans 35–135 (ETYTVKLGSD…HRGAGMVGKI (101 aa)). Cu cation is bound by residues His73, Cys123, His126, and Met131.

Belongs to the plastocyanin family. Cu(2+) serves as cofactor.

The protein localises to the cellular thylakoid membrane. Its function is as follows. Participates in electron transfer between P700 and the cytochrome b6-f complex in photosystem I. The protein is Plastocyanin (petE) of Trichormus variabilis (strain ATCC 29413 / PCC 7937) (Anabaena variabilis).